The following is a 516-amino-acid chain: L-amino-acid oxidase (516 aa).

Residues 1 to 18 form the signal peptide; that stretch reads MNVFFMFSLLFLAALGSC. Residues Cys28 and Cys191 are joined by a disulfide bond. FAD contacts are provided by residues 61-62, 81-82, Arg89, and 105-108; these read MA, EA, and GPMR. Arg108 is a binding site for substrate. N-linked (GlcNAc...) (complex) asparagine glycosylation is present at Asn190. His241 is a binding site for substrate. Val279 lines the FAD pocket. A disulfide bridge connects residues Cys349 and Cys430. Asn379 carries an N-linked (GlcNAc...) (complex) asparagine glycan. Residue Tyr390 participates in substrate binding. FAD is bound by residues Glu475 and 482–487; that span reads GWIDST. A substrate-binding site is contributed by 482 to 483; it reads GW.

Homodimer; non-covalently linked. FAD serves as cofactor. N-glycosylated at Asn-190 and Asn-379 with bis-sialylated, biantennary, core-fucosylated dodecasaccharide (composed of N-acetylglucosamine, fucose, mannose, galactose, and sialic acid residues). Expressed by the venom gland.

It is found in the secreted. The catalysed reaction is an L-alpha-amino acid + O2 + H2O = a 2-oxocarboxylate + H2O2 + NH4(+). It catalyses the reaction L-leucine + O2 + H2O = 4-methyl-2-oxopentanoate + H2O2 + NH4(+). The enzyme catalyses L-phenylalanine + O2 + H2O = 3-phenylpyruvate + H2O2 + NH4(+). It carries out the reaction L-tryptophan + O2 + H2O = indole-3-pyruvate + H2O2 + NH4(+). The catalysed reaction is L-methionine + O2 + H2O = 4-methylsulfanyl-2-oxobutanoate + H2O2 + NH4(+). It catalyses the reaction L-isoleucine + O2 + H2O = (S)-3-methyl-2-oxopentanoate + H2O2 + NH4(+). The enzyme catalyses L-arginine + O2 + H2O = 5-guanidino-2-oxopentanoate + H2O2 + NH4(+). It carries out the reaction L-aspartate + O2 + H2O = oxaloacetate + H2O2 + NH4(+). The catalysed reaction is L-histidine + O2 + H2O = 3-(imidazol-5-yl)pyruvate + H2O2 + NH4(+). It catalyses the reaction L-2-aminohexanoate + O2 + H2O = 2-oxohexanoate + H2O2 + NH4(+). The enzyme catalyses L-2-aminopentanoate + O2 + H2O = 2-oxopentanoate + H2O2 + NH4(+). In terms of biological role, catalyzes an oxidative deamination of predominantly hydrophobic and aromatic L-amino acids, thus producing hydrogen peroxide that may contribute to the diverse toxic effects of this enzyme. Shows high affinity for L-Phe, L-Trp, L-Met, L-Leu, and L-Ile, moderate affinity for L-Arg, L-Asp, and L-His, and very low affinity for L-Gln, L-Lys, and L-Ala. Also shows high activity on L-norleucine (L-2-aminohexanoate), and L-norvaline (L-2-aminopentanoate) and a weak activity on L-ornithine and L-aminobutyric acid. Also exhibits diverse biological activities, such as hemorrhage, hemolysis, edema, apoptosis of vascular endothelial cells or tumor cell lines, and antiparasitic activities, as well as regulation of platelet aggregation. Its effect on platelets is controversial, since it either induces aggregation or inhibits agonist-induced aggregation. These different effects are probably due to different experimental conditions. A possible explanation of high efficacy it that LAAO may bind to target cells through its sialylated glycan moiety that would bind to sialic acid-binding lectins (siglec) on target cells. This interaction may result in production of locally high concentrations of hydrogen peroxide in or near the binding interface, leading, in turn to oxidative damage of the siglec or another adjacent cell structural elements. This is L-amino-acid oxidase from Calloselasma rhodostoma (Malayan pit viper).